Reading from the N-terminus, the 37-residue chain is NDGNGRDSDPHDPGDWTTAGQCGLWQPARNSQHWTLV.

The span at N1–G14 shows a compositional bias: basic and acidic residues. The tract at residues N1 to V37 is disordered. The span at A28–V37 shows a compositional bias: polar residues.

The protein belongs to the peptidase S8 family. In terms of assembly, heterodimer of a large and a small chain.

It localises to the secreted. The polypeptide is Protease 2 large chain (Achromobacter lyticus).